Here is a 354-residue protein sequence, read N- to C-terminus: Falstatin (354 aa).

Residues 1 to 21 form the signal peptide; sequence MKSITFFVFNICSILALLSHC. Residues 226–236 carry the BC loop; binds and inhibits the active site cavity of cysteine proteases motif; the sequence is LEGNAGTGYLW. Residues 274-317 are disordered; that stretch reads KYKIDEHDSSKNVNREIESPEQKESDSKPKKPQMQLLGGPDRMR. Residues 275–302 are compositionally biased toward basic and acidic residues; that stretch reads YKIDEHDSSKNVNREIESPEQKESDSKP.

The protein belongs to the protease inhibitor I71 family. Oligomer; probably composed of 10 monomers. Post-translationally, during the liver stage, proteolytically cleaved.

The protein resides in the secreted. It is found in the cytoplasmic vesicle. Its subcellular location is the secretory vesicle. It localises to the microneme. The protein localises to the host cytoplasm. The protein resides in the parasitophorous vacuole lumen. Cysteine protease inhibitor. Required for the invasion of host erythrocytes by merozoites. In the mosquito vector, essential for the gliding motility of hemocoel sporozoites and, therefore, for salivary gland invasion and the subsequent transmission from the mosquito to the mammalian host. Required for the invasion of host hepatocytes. During the liver stage, may prevent host hepatocyte cell death likely by inhibiting host cysteine proteases. The sequence is that of Falstatin from Plasmodium berghei (strain Anka).